The chain runs to 90 residues: Large ribosomal subunit protein eL33 (90 aa).

This sequence belongs to the eukaryotic ribosomal protein eL33 family.

This chain is Large ribosomal subunit protein eL33, found in Methanopyrus kandleri (strain AV19 / DSM 6324 / JCM 9639 / NBRC 100938).